The chain runs to 280 residues: uncharacterized protein (280 aa).

The protein belongs to the metallo-dependent hydrolases superfamily.

This is an uncharacterized protein from Methanocaldococcus jannaschii (strain ATCC 43067 / DSM 2661 / JAL-1 / JCM 10045 / NBRC 100440) (Methanococcus jannaschii).